The primary structure comprises 1278 residues: Sterol regulatory element-binding protein cleavage-activating protein (1278 aa).

Residues 1–18 lie on the Cytoplasmic side of the membrane; that stretch reads MTLTERLREKISQAFYNH. A helical membrane pass occupies residues 19–39; sequence GLFCASYPIPIILFTGLCILA. Topologically, residues 40–279 are lumenal; the sequence is CCYPLLKLPL…SLVHVHFKEE (240 aa). Positions 46-284 are loop-1; it reads KLPLPGTGPV…HFKEEIGIAE (239 aa). Residues 60–80 are disordered; the sequence is PVKDYSPPPLTSDHKPGEPNE. Residue N263 is glycosylated (N-linked (GlcNAc...) asparagine). Residues 280 to 300 form a helical membrane-spanning segment; the sequence is IGIAELIPLVTTYIILFAYIY. An SSD domain is found at 284 to 442; sequence ELIPLVTTYI…MLFFTTVLSI (159 aa). Topologically, residues 301–312 are cytoplasmic; sequence FSTRKIDMVKSK. Residues 313–333 traverse the membrane as a helical segment; that stretch reads WGLALAAVVTVLSSLLMSVGL. At 334–344 the chain is on the lumenal side; it reads CTLFGLTPTLN. The helical transmembrane segment at 345-365 threads the bilayer; it reads GGEIFPYLVVVIGLENVLVLT. The Cytoplasmic portion of the chain corresponds to 366–401; that stretch reads KSVVSTPVDLEVKLRIAQGLSSESWSIMKNMATELG. The chain crosses the membrane as a helical span at residues 402 to 422; it reads IVLIGYFTLVPAIQEFCLFAV. Residue V423 is a topological domain, lumenal. Residues 424–444 traverse the membrane as a helical segment; it reads GLVSDFFLQMLFFTTVLSIDI. The Cytoplasmic portion of the chain corresponds to 445-518; it reads RRMELADLNK…FLARTRLAQR (74 aa). An ER export signal motif is present at residues 447–452; it reads MELADL. Residues K454 and K466 each participate in a glycyl lysine isopeptide (Lys-Gly) (interchain with G-Cter in ubiquitin) cross-link. The helical transmembrane segment at 519-539 threads the bilayer; the sequence is LIMAGTVVWIGILVYTDPAGL. The interval 535-710 is loop-7; sequence DPAGLRTYLA…QAQRDLTLYK (176 aa). Topologically, residues 540-707 are lumenal; the sequence is RTYLAAQVTE…GTAQAQRDLT (168 aa). The segment at 581–618 is disordered; it reads PPDASKLPENQTLPGEPPEPGGLAEGVHDSPAPEVTWG. Residues N590 and N641 are each glycosylated (N-linked (GlcNAc...) asparagine). Positions 668–696 are disordered; it reads EGRHPQDGRSAWPPPRPGQGGLWEAGPKG. Residues 708–728 traverse the membrane as a helical segment; sequence LYKVAALGLASGIVLVLLLLC. The Cytoplasmic segment spans residues 729 to 1278; the sequence is LYRVLCPRNY…YVPSVLEKLD (550 aa). The segment at 731–1278 is interaction with SREBF2; that stretch reads RVLCPRNYGQ…YVPSVLEKLD (548 aa). Residues 771 to 811 form a WD 1 repeat; it reads VLRGHLMDIECLASDGMLLVSCCLAGHVCVWDAQTGDCLTR. Phosphoserine is present on residues S821, S837, S850, S905, and S935. The disordered stretch occupies residues 834 to 904; the sequence is ERLSDGGKGG…RYRAGRRAQD (71 aa). WD repeat units lie at residues 951–1001 and 1004–1041; these read PPEK…LRCS and EVSSGITALVFLDRRIVAARLNGSLDFFSLETHTALSP. R1050 is subject to Omega-N-methylarginine. WD repeat units lie at residues 1076 to 1113, 1116 to 1154, 1157 to 1194, and 1196 to 1234; these read AHQKPITALKAAAGRLVTGSQDHTLRVFRLEDSCCLFT, GHSGAITTVYIDQTMVLASGGQDGAICLWDVLTGSRVSH, AHRGDVTSLTCTTSCVISSGLDDLISIWDRSTGIKLYS, and QQDLGCGASLGVISDNLLVTGGQGCVSFWDLNYGDLLQT.

Belongs to the WD repeat SCAP family. In terms of assembly, membrane region forms a homotetramer. Component of the SCAP-SREBP complex (composed of SCAP and SREBF1/SREBP1 or SREBF2/SREBP2); interacts with SREBF1/SREBP1 or SREBF2/SREBP2 through its C-terminal cytoplasmic domain. Forms a ternary complex with INSIG1 or INSIG2 through its transmembrane domains at high sterol concentrations. Interacts with PAQR3; the interaction anchors the SCAP-SREBP complex to the Golgi apparatus in low cholesterol conditions. Interacts with the SEC23-SEC24 complex in a SAR1-GTP-dependent manner through an ER export signal in its third cytoplasmic loop. Interacts with RNF139; the interaction inhibits the interaction of SCAP with SEC24B and hampering the ER to Golgi transport of the SCAP-SREBP complex. Interacts with SPRING1. In terms of processing, ubiquitinated at Lys-454 and Lys-466. RNF145 triggers ubiquitination of SCAP, likely inhibiting SCAP-SREBP complex transport to the Golgi apparatus and the subsequent processing/maturation of SREBF2/SREBP2.

The protein resides in the endoplasmic reticulum membrane. Its subcellular location is the golgi apparatus membrane. The protein localises to the cytoplasmic vesicle. It localises to the COPII-coated vesicle membrane. Functionally, escort protein required for cholesterol as well as lipid homeostasis. Regulates export of the SCAP-SREBP complex from the endoplasmic reticulum to the Golgi upon low cholesterol, thereby regulating the processing of sterol regulatory element-binding proteins (SREBPs) SREBF1/SREBP1 and SREBF2/SREBP2. At high sterol concentrations, formation of a ternary complex with INSIG (INSIG1 or INSIG2) leads to mask the ER export signal in SCAP, promoting retention of the complex in the endoplasmic reticulum. Low sterol concentrations trigger release of INSIG, a conformational change in the SSD domain of SCAP, unmasking of the ER export signal, promoting recruitment into COPII-coated vesicles and transport of the SCAP-SREBP to the Golgi: in the Golgi, SREBPs are then processed, releasing the transcription factor fragment of SREBPs from the membrane, its import into the nucleus and up-regulation of LDLR, INSIG1 and the mevalonate pathway. Binds cholesterol via its SSD domain. The chain is Sterol regulatory element-binding protein cleavage-activating protein from Bos taurus (Bovine).